The following is a 37-amino-acid chain: MVETLLSGIVLGLIPITLVGLFVTAYLQYRRGDQLDI.

The helical transmembrane segment at 5 to 25 (LLSGIVLGLIPITLVGLFVTA) threads the bilayer.

The protein belongs to the PetG family. The 4 large subunits of the cytochrome b6-f complex are cytochrome b6, subunit IV (17 kDa polypeptide, PetD), cytochrome f and the Rieske protein, while the 4 small subunits are PetG, PetL, PetM and PetN. The complex functions as a dimer.

Its subcellular location is the plastid. It is found in the chloroplast thylakoid membrane. Component of the cytochrome b6-f complex, which mediates electron transfer between photosystem II (PSII) and photosystem I (PSI), cyclic electron flow around PSI, and state transitions. PetG is required for either the stability or assembly of the cytochrome b6-f complex. The sequence is that of Cytochrome b6-f complex subunit 5 from Welwitschia mirabilis (Tree tumbo).